The primary structure comprises 264 residues: Thymidylate synthase (264 aa).

DUMP is bound at residue Arg-21. Residue His-51 coordinates (6R)-5,10-methylene-5,6,7,8-tetrahydrofolate. 126–127 contributes to the dUMP binding site; sequence RR. Catalysis depends on Cys-146, which acts as the Nucleophile. Residues 166-169, Asn-177, and 207-209 each bind dUMP; these read RSAD and HLY. Asp-169 contributes to the (6R)-5,10-methylene-5,6,7,8-tetrahydrofolate binding site. Position 263 (Ala-263) interacts with (6R)-5,10-methylene-5,6,7,8-tetrahydrofolate.

It belongs to the thymidylate synthase family. Bacterial-type ThyA subfamily. In terms of assembly, homodimer.

Its subcellular location is the cytoplasm. The catalysed reaction is dUMP + (6R)-5,10-methylene-5,6,7,8-tetrahydrofolate = 7,8-dihydrofolate + dTMP. It functions in the pathway pyrimidine metabolism; dTTP biosynthesis. Catalyzes the reductive methylation of 2'-deoxyuridine-5'-monophosphate (dUMP) to 2'-deoxythymidine-5'-monophosphate (dTMP) while utilizing 5,10-methylenetetrahydrofolate (mTHF) as the methyl donor and reductant in the reaction, yielding dihydrofolate (DHF) as a by-product. This enzymatic reaction provides an intracellular de novo source of dTMP, an essential precursor for DNA biosynthesis. The polypeptide is Thymidylate synthase (Legionella pneumophila (strain Corby)).